The sequence spans 105 residues: Pyrimidine/purine nucleoside phosphorylase (105 aa).

This sequence belongs to the nucleoside phosphorylase PpnP family.

The enzyme catalyses a purine D-ribonucleoside + phosphate = a purine nucleobase + alpha-D-ribose 1-phosphate. It catalyses the reaction adenosine + phosphate = alpha-D-ribose 1-phosphate + adenine. It carries out the reaction cytidine + phosphate = cytosine + alpha-D-ribose 1-phosphate. The catalysed reaction is guanosine + phosphate = alpha-D-ribose 1-phosphate + guanine. The enzyme catalyses inosine + phosphate = alpha-D-ribose 1-phosphate + hypoxanthine. It catalyses the reaction thymidine + phosphate = 2-deoxy-alpha-D-ribose 1-phosphate + thymine. It carries out the reaction uridine + phosphate = alpha-D-ribose 1-phosphate + uracil. The catalysed reaction is xanthosine + phosphate = alpha-D-ribose 1-phosphate + xanthine. Functionally, catalyzes the phosphorolysis of diverse nucleosides, yielding D-ribose 1-phosphate and the respective free bases. Can use uridine, adenosine, guanosine, cytidine, thymidine, inosine and xanthosine as substrates. Also catalyzes the reverse reactions. The protein is Pyrimidine/purine nucleoside phosphorylase of Cupriavidus necator (strain ATCC 17699 / DSM 428 / KCTC 22496 / NCIMB 10442 / H16 / Stanier 337) (Ralstonia eutropha).